The chain runs to 1330 residues: pre-mRNA 3' end processing protein WDR33 (1330 aa).

Residue alanine 2 is modified to N-acetylalanine. Phosphoserine is present on serine 7. Lysine 46 is modified (N6-acetyllysine). WD repeat units lie at residues 117–156, 159–198, 200–239, 242–283, 286–325, 329–369, and 373–412; these read KVKC…FETI, AHDS…VKMF, AHKE…EERI, GHGA…SLAT, AHKN…EELQ, GHKK…EVGG, and AHEG…DKMR. Residues lysine 526, lysine 530, and lysine 560 each participate in a glycyl lysine isopeptide (Lys-Gly) (interchain with G-Cter in SUMO2) cross-link. The segment at 566–1330 is disordered; that stretch reads QKQADQIQPP…GTSRGSGRGR (765 aa). A compositionally biased stretch (polar residues) spans 588–607; sequence FSGQGPISQIPQGFQQPHPS. In terms of domain architecture, Collagen-like spans 617–769; it reads GPPGPQGQFR…GPASQGIQGP (153 aa). The span at 622–642 shows a compositional bias: low complexity; the sequence is QGQFRAPGPQGQMGPQGPPMH. The segment covering 682–694 has biased composition (pro residues); it reads PHGPLGPQGPPGP. Composition is skewed to low complexity over residues 695-706 and 725-750; these read QGSSGPQGHMGP and QGHM…GMQG. Residue arginine 776 is modified to Omega-N-methylarginine. Residues 848–863 show a composition bias toward low complexity; sequence GPSGSQGQQGPPQGSL. Asymmetric dimethylarginine is present on arginine 909. Over residues 926-935 the composition is skewed to low complexity; sequence PGLGQQGAQG. Composition is skewed to basic and acidic residues over residues 965–983 and 992–1027; these read SERR…DRGP and GPPD…EFEG. Position 981 is an omega-N-methylarginine (arginine 981). At arginine 1028 the chain carries Omega-N-methylarginine. 2 stretches are compositionally biased toward basic and acidic residues: residues 1049-1061 and 1071-1115; these read PDHR…DGRG and EGRR…RGRD. A compositionally biased stretch (acidic residues) spans 1123–1133; the sequence is FGPEEGFDASD. Basic and acidic residues-rich tracts occupy residues 1134–1143, 1163–1211, and 1236–1253; these read EAARGRDLRG, EFPR…RERS, and SEHR…DRGS. Residue serine 1204 is modified to Phosphoserine. The residue at position 1256 (arginine 1256) is an Omega-N-methylarginine. A compositionally biased stretch (basic and acidic residues) spans 1275 to 1287; that stretch reads DGDHHDGYHRDEP. The segment covering 1293–1323 has biased composition (low complexity); the sequence is GSSSSSRGARSGSNWGRGSNMNSGPPRRGTS. Position 1309 is an asymmetric dimethylarginine; alternate (arginine 1309). The residue at position 1309 (arginine 1309) is an Omega-N-methylarginine; alternate.

This sequence belongs to the WD repeat WDR33 family. In terms of assembly, component of the cleavage and polyadenylation specificity factor (CPSF) module of the pre-mRNA 3'-end processing complex. Interacts with CPSF3/CPSF73. As to expression, most highly expressed in testis.

It is found in the nucleus. Functionally, essential for both cleavage and polyadenylation of pre-mRNA 3' ends. This Mus musculus (Mouse) protein is pre-mRNA 3' end processing protein WDR33 (Wdr33).